A 151-amino-acid polypeptide reads, in one-letter code: Ubiquitin-conjugating enzyme E2 W (151 aa).

A Peptide (Met-Gly) (interchain with G-Cter in ubiquitin) cross-link involves residue M1. Positions 3 to 151 constitute a UBC core domain; sequence SMQKRLQKEL…TKWWYHDDTC (149 aa). Residue C91 is the Glycyl thioester intermediate of the active site.

Belongs to the ubiquitin-conjugating enzyme family. As to quaternary structure, homodimer. Interacts with FANCL. Interacts with STUB1/CHIP. Ubiquitinated in vitro in the presence of FANCL. Autoubiquitinated at Met-1.

It is found in the nucleus. It catalyses the reaction S-ubiquitinyl-[E1 ubiquitin-activating enzyme]-L-cysteine + [E2 ubiquitin-conjugating enzyme]-L-cysteine = [E1 ubiquitin-activating enzyme]-L-cysteine + S-ubiquitinyl-[E2 ubiquitin-conjugating enzyme]-L-cysteine.. The enzyme catalyses S-ubiquitinyl-[E1 ubiquitin-activating enzyme]-L-cysteine + [acceptor protein]-N-terminal-amino acid = [E1 ubiquitin-activating enzyme]-L-cysteine + N-terminal-ubiquitinyl-[acceptor protein].. Its pathway is protein modification; protein ubiquitination. Functionally, accepts ubiquitin from the E1 complex and catalyzes its covalent attachment to other proteins. Specifically monoubiquitinates the N-terminus of various substrates, including ATXN3, MAPT/TAU, POLR2H/RPB8 and STUB1/CHIP, by recognizing backbone atoms of disordered N-termini. Involved in degradation of misfolded chaperone substrates by mediating monoubiquitination of STUB1/CHIP, leading to recruitment of ATXN3 to monoubiquitinated STUB1/CHIP, and restriction of the length of ubiquitin chain attached to STUB1/CHIP substrates by ATXN3. After UV irradiation, but not after mitomycin-C (MMC) treatment, acts as a specific E2 ubiquitin-conjugating enzyme for the Fanconi anemia complex by associating with E3 ubiquitin-protein ligase FANCL and catalyzing monoubiquitination of FANCD2, a key step in the DNA damage pathway. In vitro catalyzes 'Lys-11'-linked polyubiquitination. UBE2W-catalyzed ubiquitination also occurs in the presence of inactive RING/U-box type E3s, i.e. lacking the active site cysteine residues to form thioester bonds with ubiquitin, or even in the absence of E3, albeit at a slower rate. The polypeptide is Ubiquitin-conjugating enzyme E2 W (UBE2W) (Bos taurus (Bovine)).